A 125-amino-acid chain; its full sequence is Large ribosomal subunit protein bL19 (125 aa).

The protein belongs to the bacterial ribosomal protein bL19 family.

Functionally, this protein is located at the 30S-50S ribosomal subunit interface and may play a role in the structure and function of the aminoacyl-tRNA binding site. This Wolbachia pipientis wMel protein is Large ribosomal subunit protein bL19.